Consider the following 59-residue polypeptide: Eag protein (59 aa).

In Salmonella phage P22 (Bacteriophage P22), this protein is Eag protein (eag).